Reading from the N-terminus, the 231-residue chain is Class II histocompatibility antigen, B-L beta chain (231 aa).

Residues 1–89 (FFQWSATVEC…IVAPLTLQRR (89 aa)) form a beta-1 region. The Extracellular segment spans residues 1-194 (FFQWSATVEC…PGDVSRSKLL (194 aa)). 2 disulfide bridges follow: cysteine 10–cysteine 74 and cysteine 111–cysteine 167. A glycan (N-linked (GlcNAc...) asparagine) is linked at asparagine 14. The interval 90–182 (EPKVRIFALQ…SLQQPITQRW (93 aa)) is beta-2. The Ig-like C1-type domain occupies 91–179 (PKVRIFALQS…EHTSLQQPIT (89 aa)). Residues 183-194 (EPPGDVSRSKLL) form a connecting peptide region. Residues 195 to 219 (MGVGGFVLGLVYLALGIFFFLCSKK) traverse the membrane as a helical segment. Topologically, residues 220-231 (GQPDPTSPGILN) are cytoplasmic.

The protein belongs to the MHC class II family.

Its subcellular location is the membrane. The sequence is that of Class II histocompatibility antigen, B-L beta chain from Gallus gallus (Chicken).